The sequence spans 1249 residues: MSPAAAAAGAGERRRPIASVRDGRGRGCGGPARAVLLGLSLVGLLLYLVPAAAALAWLTVGATAAWWGLSREPRGSRPLSSFVRKARHRRPLSSFVRKARHRRTLFASPLAKSTANGNLLEPRTLLEGPDPAELLLMGSYLGKPGPPQPAAAPEGQDLRDRPGRRPPARPAPRSPPPRSPPPRSPPPSPPTHRAHHVYPSLPTPLLRPSRRPSPRDCGTLPNRFVITPRRRYPIHQAQYSCLGVLPTVCWNGYHKKAVLSPRNSRMVCSPVTVRIAPPDRRFSRSAIPEQIISSTLSSPSSNAPDPCAKETVLSALKEKEKKRTVEEEDQIFLDGQENKRRRHDSSGSGHSAFEPLVANGVPASFVPKPGSLKRGLNSQSSDDHLNKRSRSSSMSSLTGAYASGIPSSSRNAITSSYSSTRGISQLWKRNGPSSSPFSSPASSRSQTPERPAKKIREEELCHHSSSSTPLAADRESQGEKAADTTPRKKQNSNSQSTPGSSGQRKRKVQLLPSRRGEQLTLPPPPQLGYSITAEDLDLEKKASLQWFNQALEDKSDAASNSVTETPPITQPSFTFTLPAAAPASPPTSLLAPSTNPLLESLKKMQTPPSLPPCPESAGAATTEALSPPKTPSLLPPLGLSQSGPPGLLPSPSFDSKPPTTLLGLIPAPSMVPATDTKAPPTLQAETATKPQATSAPSPAPKQSFLFGTQNTSPSSPAAPAASSAPPMFKPIFTAPPKSEKEGPTPPGPSVTATAPSSSSLPTTTSTTAPTFQPVFSSMGPPASVPLPAPFFKQTTTPATAPTTTAPLFTGLASATSAVAPITSASPSTDSASKPAFGFGINSVSSSSVSTTTSTATAASQPFLFGAPQASAASFTPAMGSIFQFGKPPALPTTTTVTTFSQSLHTAVPTATSSSAADFSGFGSTLATSAPATSSQPTLTFSNTSTPTFNIPFGSSAKSPLPSYPGANPQPAFGAAEGQPPGAAKPALAPSFGSSFTFGNSAAPAAAPTPAPPSMIKVVPAYVPTPIHPIFGGATHSAFGLKATASAFGAPASSQPAFGGSTAVFFGAATSSGFGATTQTASSGSSSSVFGSTTPSPFTFGGSAAPAGSGSFGINVATPGSSTTTGAFSFGAGQSGSTATSTPFAGGLGQNALGTTGQSTPFAFNVSSTTESKPVFGGTATPTFGLNTPAPGVGTSGSSLSFGASSAPAQGFVGVAPFGSAALSFSIGAGSKTPGARQRLQARRQHTRKK.

Residues 1–10 (MSPAAAAAGA) are compositionally biased toward low complexity. The disordered stretch occupies residues 1-27 (MSPAAAAAGAGERRRPIASVRDGRGRG). The segment at 1–34 (MSPAAAAAGAGERRRPIASVRDGRGRGCGGPARA) is cisternal side. The required for targeting to the nucleus and nuclear pore complex stretch occupies residues 1-285 (MSPAAAAAGA…APPDRRFSRS (285 aa)). A compositionally biased stretch (basic and acidic residues) spans 11–25 (GERRRPIASVRDGRG). Residues 35–55 (VLLGLSLVGLLLYLVPAAAAL) traverse the membrane as a helical segment. The pore side stretch occupies residues 56–1249 (AWLTVGATAA…QARRQHTRKK (1194 aa)). S94 carries the post-translational modification Phosphoserine. Disordered stretches follow at residues 136-220 (LMGS…CGTL), 319-530 (KEKK…LGYS), 602-776 (KKMQ…PVFS), 959-986 (PLPSYPGANPQPAFGAAEGQPPGAAKPA), and 1226-1249 (IGAGSKTPGARQRLQARRQHTRKK). Residues 168–190 (ARPAPRSPPPRSPPPRSPPPSPP) are compositionally biased toward pro residues. 5 positions are modified to phosphoserine: S345, S351, S371, S393, and S396. Residues 405–423 (IPSSSRNAITSSYSSTRGI) show a composition bias toward polar residues. The span at 432 to 445 (PSSSPFSSPASSRS) shows a compositional bias: low complexity. Composition is skewed to basic and acidic residues over residues 450-462 (RPAKKIREEELCH) and 472-486 (ADRESQGEKAADTTP). Positions 491-502 (NSNSQSTPGSSG) are enriched in polar residues. Over residues 635–652 (PPLGLSQSGPPGLLPSPS) the composition is skewed to low complexity. The span at 683–696 (QAETATKPQATSAP) shows a compositional bias: polar residues. Low complexity-rich tracts occupy residues 712–726 (SPSSPAAPAASSAPP) and 749–770 (SVTATAPSSSSLPTTTSTTAPT). Residues 1239–1249 (LQARRQHTRKK) show a composition bias toward basic residues.

This sequence belongs to the POM121 family.

Its subcellular location is the nucleus. The protein resides in the nuclear pore complex. It localises to the nucleus membrane. The protein localises to the endoplasmic reticulum membrane. Essential component of the nuclear pore complex (NPC). The repeat-containing domain may be involved in anchoring components of the pore complex to the pore membrane. When overexpressed in cells induces the formation of cytoplasmic annulate lamellae (AL). The chain is Nuclear envelope pore membrane protein POM 121 (POM121) from Homo sapiens (Human).